A 325-amino-acid chain; its full sequence is Protease HtpX homolog 2 (325 aa).

Helical transmembrane passes span 10 to 30 (LNMA…ALAV) and 41 to 61 (VGLI…QWLF). His147 provides a ligand contact to Zn(2+). The active site involves Glu148. His151 contacts Zn(2+). 2 helical membrane-spanning segments follow: residues 159–179 (LLMA…WLFW) and 196–216 (LVFL…LLVL). Glu223 is a Zn(2+) binding site.

It belongs to the peptidase M48B family. Zn(2+) is required as a cofactor.

Its subcellular location is the cell membrane. This Saccharolobus solfataricus (strain ATCC 35092 / DSM 1617 / JCM 11322 / P2) (Sulfolobus solfataricus) protein is Protease HtpX homolog 2.